A 285-amino-acid polypeptide reads, in one-letter code: Dermonecrotic toxin LlSicTox-alphaIII2 (285 aa).

His-12 is a catalytic residue. Mg(2+) contacts are provided by Glu-32 and Asp-34. The active-site Nucleophile is the His-47. The cysteines at positions 51 and 57 are disulfide-linked. Asp-91 contributes to the Mg(2+) binding site.

The protein belongs to the arthropod phospholipase D family. Class I subfamily. Mg(2+) serves as cofactor. As to expression, expressed by the venom gland.

Its subcellular location is the secreted. The catalysed reaction is an N-(acyl)-sphingosylphosphocholine = an N-(acyl)-sphingosyl-1,3-cyclic phosphate + choline. It catalyses the reaction an N-(acyl)-sphingosylphosphoethanolamine = an N-(acyl)-sphingosyl-1,3-cyclic phosphate + ethanolamine. The enzyme catalyses a 1-acyl-sn-glycero-3-phosphocholine = a 1-acyl-sn-glycero-2,3-cyclic phosphate + choline. It carries out the reaction a 1-acyl-sn-glycero-3-phosphoethanolamine = a 1-acyl-sn-glycero-2,3-cyclic phosphate + ethanolamine. Its function is as follows. Dermonecrotic toxins cleave the phosphodiester linkage between the phosphate and headgroup of certain phospholipids (sphingolipid and lysolipid substrates), forming an alcohol (often choline) and a cyclic phosphate. This toxin acts on sphingomyelin (SM) (228.2 U/mg). It may also act on ceramide phosphoethanolamine (CPE), lysophosphatidylcholine (LPC) and lysophosphatidylethanolamine (LPE), but not on lysophosphatidylserine (LPS), and lysophosphatidylglycerol (LPG). It acts by transphosphatidylation, releasing exclusively cyclic phosphate products as second products. Induces dermonecrosis, hemolysis, increased vascular permeability, edema, inflammatory response, and platelet aggregation. Is lethal to mice. The protein is Dermonecrotic toxin LlSicTox-alphaIII2 of Loxosceles laeta (South American recluse spider).